The chain runs to 199 residues: Transmembrane protein 223 (199 aa).

Residues 1–43 lie on the Mitochondrial matrix side of the membrane; sequence MVASVPLRNVSHLLSVLRSQNVPRYLQNGVPRDVLLFRHERGR. Residues 44–64 traverse the membrane as a helical segment; it reads FFAILGLFCAGQGIFWTSLAV. Residues 65–94 are Mitochondrial intermembrane-facing; the sequence is AALSRPLSRVPAEAPNRSYQDLRSALWRYG. The helical transmembrane segment at 95 to 115 threads the bilayer; it reads LAVGCGTMGVLVLGAGLLYSL. Residues 116–199 lie on the Mitochondrial matrix side of the membrane; sequence RSVRSVMLLA…DNTVGAYRSL (84 aa).

It belongs to the TMEM223 family. As to quaternary structure, associates with the mitochondrial ribosome.

The protein localises to the mitochondrion inner membrane. In terms of biological role, mitochondrial ribosome-associated protein involved in the first steps of cytochrome c oxidase complex (complex IV) biogenesis. Stimulates the translation of MT-CO1 mRNA and is a constituent of early MT-CO1 assembly intermediates. In Mus musculus (Mouse), this protein is Transmembrane protein 223.